The primary structure comprises 633 residues: MNAITFLGNSTMIPSQCILRAFTRISPSKYIRDTSFRSYPSRFSSCINQYRNADSDRIIRPTNAVPFCTDRQSSVTAQVVSEARSHSASTTCANDTTLDQIYTKNGLNVKPLVVERLKRDEKDEEAVNEDEEGVKRDGFEGVKCNDVEEEAWRLLRDSIVTYCDSPVGTVAAKDPTDTTPSNYDQVFIRDFVPSALAFLLKGESEIVRNFLLHTLQLQSWEKTVDCYSPGQGLMPASFKVRTLPLEEDKFEEVLDPDFGEAAIGRVAPVDSGLWWIILLRAYGKITGDYSLQERIDVQTGIKMIANLCLADGFDMFPTLLVTDGSCMIDRRMGIHGHPLEIQALFYSALRSSREMITVNDSSKNIIKTISNRLSALSFHIRENYWVDKNKINEIYRYKTEEYSMDATNKFNIYPEQVSPWLMDWVPESPDSGFLIGNLQPAHMDFRFFTLGNLWSIISSLGTPKQNQAILNLVEEKWDDLVGHMPLKICYPALESSEWHIITGSDPKNTPWSYHNGGSWPTLLWQFTLACIKMGRPELAEKAVTLAEKRLQADRWPEYYDTRDGKFIGKQSRLYQTWTIAGFLTSKQLLQNPEIASSLFWEEDLELLESCVCVLTKSGRKKCSRAAAKSQILI.

Residues 1–71 constitute a chloroplast transit peptide; sequence MNAITFLGNS…TNAVPFCTDR (71 aa). S623 carries the phosphoserine modification.

This sequence belongs to the glycosyl hydrolase 100 family. As to expression, expressed in flowers.

It localises to the plastid. It is found in the chloroplast. The catalysed reaction is Hydrolysis of terminal non-reducing beta-D-fructofuranoside residues in beta-D-fructofuranosides.. In terms of biological role, chloroplastic invertase that cleaves sucrose into glucose and fructose and may participate in the carbon flux between the cytosol and plastids in leaves. This is Probable alkaline/neutral invertase A, chloroplastic from Arabidopsis thaliana (Mouse-ear cress).